The primary structure comprises 177 residues: Peptide methionine sulfoxide reductase MsrA (177 aa).

Cysteine 15 is an active-site residue.

This sequence belongs to the MsrA Met sulfoxide reductase family.

The enzyme catalyses L-methionyl-[protein] + [thioredoxin]-disulfide + H2O = L-methionyl-(S)-S-oxide-[protein] + [thioredoxin]-dithiol. It catalyses the reaction [thioredoxin]-disulfide + L-methionine + H2O = L-methionine (S)-S-oxide + [thioredoxin]-dithiol. Has an important function as a repair enzyme for proteins that have been inactivated by oxidation. Catalyzes the reversible oxidation-reduction of methionine sulfoxide in proteins to methionine. In Listeria innocua serovar 6a (strain ATCC BAA-680 / CLIP 11262), this protein is Peptide methionine sulfoxide reductase MsrA.